The following is a 461-amino-acid chain: GTPase Der (461 aa).

2 EngA-type G domains span residues 3–167 (PQVI…GEKQ) and 190–371 (LKLA…AAWS). GTP-binding positions include 9-16 (GRPNVGKS), 56-60 (DTAGW), 119-122 (NKAE), 196-203 (GRPNAGKS), 249-253 (DTAGM), and 314-317 (NKWD). Residues 372–456 (KRVPTAALNR…PIRLTLRSPK (85 aa)) form the KH-like domain.

It belongs to the TRAFAC class TrmE-Era-EngA-EngB-Septin-like GTPase superfamily. EngA (Der) GTPase family. As to quaternary structure, associates with the 50S ribosomal subunit.

In terms of biological role, GTPase that plays an essential role in the late steps of ribosome biogenesis. This is GTPase Der from Novosphingobium aromaticivorans (strain ATCC 700278 / DSM 12444 / CCUG 56034 / CIP 105152 / NBRC 16084 / F199).